The following is a 504-amino-acid chain: Probable cytochrome P450 305a1 (504 aa).

Cysteine 450 provides a ligand contact to heme.

This sequence belongs to the cytochrome P450 family. It depends on heme as a cofactor.

The protein localises to the endoplasmic reticulum membrane. The protein resides in the microsome membrane. Functionally, may be involved in the metabolism of insect hormones and in the breakdown of synthetic insecticides. This is Probable cytochrome P450 305a1 (Cyp305a1) from Drosophila melanogaster (Fruit fly).